Consider the following 2959-residue polypeptide: uncharacterized protein (2959 aa).

The protein resides in the virion. This is an uncharacterized protein from Acanthamoeba polyphaga mimivirus (APMV).